The chain runs to 216 residues: Outer-membrane lipoprotein LolB (216 aa).

Residues 1 to 21 (MLIFKICFYRLLPLSVLLLAA) form the signal peptide. Residue Cys22 is the site of N-palmitoyl cysteine attachment. The S-diacylglycerol cysteine moiety is linked to residue Cys22.

The protein belongs to the LolB family. As to quaternary structure, monomer.

It localises to the cell outer membrane. Plays a critical role in the incorporation of lipoproteins in the outer membrane after they are released by the LolA protein. This chain is Outer-membrane lipoprotein LolB, found in Hamiltonella defensa subsp. Acyrthosiphon pisum (strain 5AT).